A 469-amino-acid chain; its full sequence is Mannosyl-oligosaccharide 1,2-alpha-mannosidase IA (469 aa).

The Lumenal segment spans residues 1-469; the sequence is REPADAAVRE…DQKEVEVKVK (469 aa). Cys-292 and Cys-324 are disulfide-bonded. Asn-329 carries an N-linked (GlcNAc...) asparagine glycan. The active-site Proton donor is the Glu-338. Residue Thr-449 coordinates Ca(2+).

It belongs to the glycosyl hydrolase 47 family. It depends on Ca(2+) as a cofactor.

The protein localises to the golgi apparatus membrane. The enzyme catalyses N(4)-(alpha-D-Man-(1-&gt;2)-alpha-D-Man-(1-&gt;2)-alpha-D-Man-(1-&gt;3)-[alpha-D-Man-(1-&gt;2)-alpha-D-Man-(1-&gt;3)-[alpha-D-Man-(1-&gt;2)-alpha-D-Man-(1-&gt;6)]-alpha-D-Man-(1-&gt;6)]-beta-D-Man-(1-&gt;4)-beta-D-GlcNAc-(1-&gt;4)-beta-D-GlcNAc)-L-asparaginyl-[protein] (N-glucan mannose isomer 9A1,2,3B1,2,3) + 4 H2O = N(4)-(alpha-D-Man-(1-&gt;3)-[alpha-D-Man-(1-&gt;3)-[alpha-D-Man-(1-&gt;6)]-alpha-D-Man-(1-&gt;6)]-beta-D-Man-(1-&gt;4)-beta-D-GlcNAc-(1-&gt;4)-beta-D-GlcNAc)-L-asparaginyl-[protein] (N-glucan mannose isomer 5A1,2) + 4 beta-D-mannose. It catalyses the reaction N(4)-(alpha-D-Man-(1-&gt;2)-alpha-D-Man-(1-&gt;2)-alpha-D-Man-(1-&gt;3)-[alpha-D-Man-(1-&gt;3)-[alpha-D-Man-(1-&gt;2)-alpha-D-Man-(1-&gt;6)]-alpha-D-Man-(1-&gt;6)]-beta-D-Man-(1-&gt;4)-beta-D-GlcNAc-(1-&gt;4)-beta-D-GlcNAc)-L-asparaginyl-[protein] (N-glucan mannose isomer 8A1,2,3B1,3) + 3 H2O = N(4)-(alpha-D-Man-(1-&gt;3)-[alpha-D-Man-(1-&gt;3)-[alpha-D-Man-(1-&gt;6)]-alpha-D-Man-(1-&gt;6)]-beta-D-Man-(1-&gt;4)-beta-D-GlcNAc-(1-&gt;4)-beta-D-GlcNAc)-L-asparaginyl-[protein] (N-glucan mannose isomer 5A1,2) + 3 beta-D-mannose. The protein operates within protein modification; protein glycosylation. Inhibited by both 1-deoxymannojirimycin and kifunensine. In terms of biological role, involved in the maturation of Asn-linked oligosaccharides. Progressively trim alpha-1,2-linked mannose residues from Man(9)GlcNAc(2) to produce Man(5)GlcNAc(2). The sequence is that of Mannosyl-oligosaccharide 1,2-alpha-mannosidase IA (MAN1A1) from Oryctolagus cuniculus (Rabbit).